The primary structure comprises 149 residues: UPAR/Ly6 domain-containing protein bou (149 aa).

An N-terminal signal peptide occupies residues 1–31 (MWPPKHAHIGWLSSLALVVLLMSLQMVMVSG). Residues 32–126 (IECYVCDTSD…YTCDTDGCNA (95 aa)) are Extracellular-facing. Disulfide bonds link Cys-34-Cys-74, Cys-37-Cys-48, Cys-65-Cys-91, Cys-100-Cys-115, and Cys-119-Cys-124. Asn-64 carries an N-linked (GlcNAc...) asparagine glycan. Asn-125 carries GPI-anchor amidated asparagine lipidation. The propeptide at 126-149 (AAGRLELEWGVAAALLTLTWLLRH) is removed in mature form. The helical transmembrane segment at 127 to 147 (AGRLELEWGVAAALLTLTWLL) threads the bilayer. At 148 to 149 (RH) the chain is on the cytoplasmic side.

GPI-anchored.

The protein localises to the cell membrane. The protein resides in the cell junction. It localises to the septate junction. It is found in the cytoplasm. Its subcellular location is the cell cortex. The protein localises to the secreted. The protein resides in the apicolateral cell membrane. Functionally, involved in tracheal paracellular barrier functions mediated by epithelial cell septate junctions. Involved in paracellular barrier functions mediated by glial cell septate junctions in the peripheral nervous system, including the chordotonal organs, but not the hemolymph-brain barrier (the insect blood-brain barrier) of the central nervous system. Required for septate junction assembly, possibly by organizing the preassembly and transport of septate junction proteins such as dlg1/disks large 1, Nrx-IV/Neurexin-IV and the claudin protein kune. Involved in chitin fiber organization during tracheal development. Secreted, possibly in association with extracellular vesicles, to act non-autonomously on tissues distant from its site of expression. The sequence is that of UPAR/Ly6 domain-containing protein bou from Drosophila melanogaster (Fruit fly).